The sequence spans 159 residues: Transcription elongation factor GreA (159 aa).

Residues 43-75 (LSENAEYDAAREEQSQLEAKIGEIENKLASATI) are a coiled coil.

It belongs to the GreA/GreB family.

Necessary for efficient RNA polymerase transcription elongation past template-encoded arresting sites. The arresting sites in DNA have the property of trapping a certain fraction of elongating RNA polymerases that pass through, resulting in locked ternary complexes. Cleavage of the nascent transcript by cleavage factors such as GreA or GreB allows the resumption of elongation from the new 3'terminus. GreA releases sequences of 2 to 3 nucleotides. The sequence is that of Transcription elongation factor GreA from Chlorobaculum tepidum (strain ATCC 49652 / DSM 12025 / NBRC 103806 / TLS) (Chlorobium tepidum).